The primary structure comprises 188 residues: DPITAALSQRAMVLGKSGELKTWGLVLGALKAAREEQVTSEQAKFWLGLGGGRVSPPGPECIEKPATERRIDKGEEVGETTVQRDAKMAPEETATPKTVGTSCYHCGTAIGCNCATASAPPPPYVGSGLYPSLAGVGEQQGQGGDTPRGAEQPRAEPGHAGLAPGPALTDWARIREELASTGPPVVAM.

Residues 77–90 show a composition bias toward basic and acidic residues; the sequence is VGETTVQRDAKMAP. The segment at 77–99 is disordered; the sequence is VGETTVQRDAKMAPEETATPKTV. Positions 121-124 match the PPXY motif motif; sequence PPPY. The tract at residues 130–166 is disordered; it reads YPSLAGVGEQQGQGGDTPRGAEQPRAEPGHAGLAPGP.

In terms of processing, specific enzymatic cleavages in vivo yield mature proteins.

It localises to the virion. The sequence is that of Gag polyprotein (ev-2) from Galliformes (EV-2).